The chain runs to 120 residues: NAD(P)H-quinone oxidoreductase subunit 3 (120 aa).

Helical transmembrane passes span 6–26, 64–84, and 89–109; these read GYDA…LALV, MFAL…PWAV, and LGLL…VALA.

It belongs to the complex I subunit 3 family. In terms of assembly, NDH-1 can be composed of about 15 different subunits; different subcomplexes with different compositions have been identified which probably have different functions.

It is found in the cellular thylakoid membrane. The enzyme catalyses a plastoquinone + NADH + (n+1) H(+)(in) = a plastoquinol + NAD(+) + n H(+)(out). It carries out the reaction a plastoquinone + NADPH + (n+1) H(+)(in) = a plastoquinol + NADP(+) + n H(+)(out). Its function is as follows. NDH-1 shuttles electrons from an unknown electron donor, via FMN and iron-sulfur (Fe-S) centers, to quinones in the respiratory and/or the photosynthetic chain. The immediate electron acceptor for the enzyme in this species is believed to be plastoquinone. Couples the redox reaction to proton translocation, and thus conserves the redox energy in a proton gradient. Cyanobacterial NDH-1 also plays a role in inorganic carbon-concentration. The chain is NAD(P)H-quinone oxidoreductase subunit 3 from Synechococcus sp. (strain CC9902).